Here is a 569-residue protein sequence, read N- to C-terminus: Protein GPR108 (569 aa).

A signal peptide spans 1–34 (MAVSERRGLSGESPTQCRWGYLSLLVLTLSGCSG). 3 N-linked (GlcNAc...) asparagine glycosylation sites follow: asparagine 59, asparagine 111, and asparagine 182. Residues 144 to 219 (LLPEAPTQSG…DPSGKEKDQV (76 aa)) form a disordered region. The segment covering 180 to 192 (KENQTAPQVSGDK) has biased composition (polar residues). A compositionally biased stretch (basic and acidic residues) spans 194 to 203 (TPGEHRHSSE). Asparagine 226 and asparagine 230 each carry an N-linked (GlcNAc...) asparagine glycan. 7 consecutive transmembrane segments (helical) span residues 289–309 (LYLI…SVLC), 318–338 (IHWL…FHSI), 362–382 (LLKG…WAFV), 393–413 (IFGI…VIES), 427–447 (ILFL…VWSI), 475–495 (VMVI…QVAV), and 499–519 (WQWL…VLTG).

The protein belongs to the LU7TM family. High expression in spleen, lung, stomach, large and small intestine, and thymus.

It localises to the golgi apparatus. Its subcellular location is the cis-Golgi network membrane. The protein resides in the trans-Golgi network membrane. The protein localises to the golgi apparatus membrane. May play a role in intracellular immune modulation by activating NF-kappaB response and attenuating Toll-like-receptor response. Its function is as follows. (Microbial infection) Plays an essential function in adeno-associated virus (AAV) transduction, across multiple serotypes except AAV5. May play a critical role in mediating the endosomal virus escape or in the AAV virions trafficking from endosomes to the nucleus. The protein is Protein GPR108 (Gpr108) of Mus musculus (Mouse).